The chain runs to 204 residues: Translation initiation factor IF-3 (204 aa).

The interval 169-204 (VPKAAPKRDSGRSESAQEAPTARSAEASRPEAPANA) is disordered.

Belongs to the IF-3 family. Monomer.

The protein resides in the cytoplasm. Functionally, IF-3 binds to the 30S ribosomal subunit and shifts the equilibrium between 70S ribosomes and their 50S and 30S subunits in favor of the free subunits, thus enhancing the availability of 30S subunits on which protein synthesis initiation begins. The sequence is that of Translation initiation factor IF-3 from Deinococcus geothermalis (strain DSM 11300 / CIP 105573 / AG-3a).